We begin with the raw amino-acid sequence, 305 residues long: Nucleotide-binding protein Saro_2904 (305 aa).

Position 15 to 22 (15 to 22) interacts with ATP; that stretch reads GLLGAGKT. 68–71 serves as a coordination point for GTP; it reads DTRT.

The protein belongs to the RapZ-like family.

Functionally, displays ATPase and GTPase activities. The protein is Nucleotide-binding protein Saro_2904 of Novosphingobium aromaticivorans (strain ATCC 700278 / DSM 12444 / CCUG 56034 / CIP 105152 / NBRC 16084 / F199).